The sequence spans 234 residues: MEDKVFNKPIEKQFEFDEEVASVFDDMLNRSVPFYKENLNLQIDILKNFLSDQDKIIDLGSSTGTFLIELAKKKENLDLIGIDNSEAMIKRAKNKARAFGVKVEFINSDFLEYDLSGSKAIVANYTVQFIRPLKREKLIKKIYDSLKNDGIFLMSEKLITENKKLNKIMIDIYYDYKKQMGYSEFEIAQKREALENVLIPYTMQENIEMLKNAGFKEIEVVFRWNNFATFIAFK.

S-adenosyl-L-methionine is bound by residues tyrosine 35, 60–62 (GSS), 83–84 (DN), asparagine 124, and arginine 191.

The protein belongs to the class I-like SAM-binding methyltransferase superfamily. Cx-SAM synthase family. As to quaternary structure, homodimer.

The catalysed reaction is prephenate + S-adenosyl-L-methionine = carboxy-S-adenosyl-L-methionine + 3-phenylpyruvate + H2O. Catalyzes the conversion of S-adenosyl-L-methionine (SAM) to carboxy-S-adenosyl-L-methionine (Cx-SAM). The polypeptide is Carboxy-S-adenosyl-L-methionine synthase (Nautilia profundicola (strain ATCC BAA-1463 / DSM 18972 / AmH)).